Reading from the N-terminus, the 365-residue chain is Histidinol-phosphate aminotransferase (365 aa).

N6-(pyridoxal phosphate)lysine is present on Lys-221.

It belongs to the class-II pyridoxal-phosphate-dependent aminotransferase family. Histidinol-phosphate aminotransferase subfamily. In terms of assembly, homodimer. Pyridoxal 5'-phosphate serves as cofactor.

The catalysed reaction is L-histidinol phosphate + 2-oxoglutarate = 3-(imidazol-4-yl)-2-oxopropyl phosphate + L-glutamate. It participates in amino-acid biosynthesis; L-histidine biosynthesis; L-histidine from 5-phospho-alpha-D-ribose 1-diphosphate: step 7/9. The sequence is that of Histidinol-phosphate aminotransferase from Rhodopseudomonas palustris (strain HaA2).